Here is a 655-residue protein sequence, read N- to C-terminus: DNA topoisomerase 4 subunit B (655 aa).

ATP-binding positions include Y9, N49, D76, 116-122, and K340; that span reads GLHGVGA. Basic and acidic residues predominate over residues 387–397; the sequence is AARKAREEARS. The segment at 387-419 is disordered; sequence AARKAREEARSGKKRKKSEATLSGKLTPAGSRN. Residues 423–537 enclose the Toprim domain; sequence NELYLVEGDS…HGKVFIALPP (115 aa). Residues E429, D502, and D504 each contribute to the Mg(2+) site.

It belongs to the type II topoisomerase family. ParE type 2 subfamily. As to quaternary structure, heterotetramer composed of ParC and ParE. The cofactor is Mg(2+). Requires Mn(2+) as cofactor. Ca(2+) is required as a cofactor.

It carries out the reaction ATP-dependent breakage, passage and rejoining of double-stranded DNA.. Functionally, topoisomerase IV is essential for chromosome segregation. It relaxes supercoiled DNA. Performs the decatenation events required during the replication of a circular DNA molecule. The sequence is that of DNA topoisomerase 4 subunit B from Bacillus subtilis (strain 168).